Consider the following 1358-residue polypeptide: DNA-directed RNA polymerase subunit beta (1358 aa).

The protein belongs to the RNA polymerase beta chain family. In terms of assembly, the RNAP catalytic core consists of 2 alpha, 1 beta, 1 beta' and 1 omega subunit. When a sigma factor is associated with the core the holoenzyme is formed, which can initiate transcription.

It catalyses the reaction RNA(n) + a ribonucleoside 5'-triphosphate = RNA(n+1) + diphosphate. Functionally, DNA-dependent RNA polymerase catalyzes the transcription of DNA into RNA using the four ribonucleoside triphosphates as substrates. The polypeptide is DNA-directed RNA polymerase subunit beta (Francisella philomiragia subsp. philomiragia (strain ATCC 25017 / CCUG 19701 / FSC 153 / O#319-036)).